A 718-amino-acid polypeptide reads, in one-letter code: MFQMAKRAFLSTTLTLGLLAGSALPFLPASAAYADPDIAVTNKQSFSTDVIYQVFTDRFLDGNPSNNPTGAAYDATCSNLKLYCGGDWQGLINKINDNYFSDLGVTALWISQPVENIFATINYSGVTNTAYHGYWARDFKKTNPYFGTMADFQNLITTAHAKGIKIIIDFAPNHTSPAMETDTSFAENGKLYDNGTLVGGYTNDTNGYFHHNGGSDFSSLENGIYKNLYDLADFNHNNATIDKYFKDAIKLWLDMGVDGIRVDAVKHIALGWQKSWMSSIYVHKPVFTFGEWFLGSAASDADNTDFANKSGMSLLDFRFNSAVRNVFRDNTSNMYALDSMINSTATDYNQVNDQVTFIDNHDMDRFKTSAVNNRRLEQALAFTLTSRGVPAIYYGTEQYLTGNGDPDNRAKMPSFSKSTTAFNVISKLAPLRKSNPAIAYGSTQQRWINNDVYVYERKFGKSVAVVAVNRNLSTPANITGLSTSLPTGSYTDVLGGVLNGNNITSSNGSVNSFTLAAGATAVWQYTAAETTPTIGHVGPVMGKPGNVVTIDGRGFGSTKGTVYFGTTAVTGAAITSWEDTQIKVTIPSVAAGNYAVKVAANGVNSNAYNHFTILTGDQVTVRFVINNASTTLGQNIYLTGNVAELGNWSTGSTAIGPAFNQVIHQYPTWYYDVSVPAGKELEFKFFKKNGSTITWEGGSNHKFTTPASGTATVTVNWQ.

The first 34 residues, 1-34 (MFQMAKRAFLSTTLTLGLLAGSALPFLPASAAYA), serve as a signal peptide directing secretion. The interval 35-172 (DPDIAVTNKQ…GIKIIIDFAP (138 aa)) is A1. D61, N63, N66, and N67 together coordinate Ca(2+). An intrachain disulfide couples C77 to C84. The Ca(2+) site is built by G85 and D87. 134–135 (YW) contributes to the substrate binding site. N173 serves as a coordination point for Ca(2+). The b stretch occupies residues 173–236 (NHTSPAMETD…NLYDLADFNH (64 aa)). A substrate-binding site is contributed by H174. I224 provides a ligand contact to Ca(2+). Residue 227-230 (NLYD) participates in substrate binding. D233 contacts Ca(2+). The interval 237-440 (NNATIDKYFK…LRKSNPAIAY (204 aa)) is A2. R261 is a substrate binding site. D263 (nucleophile) is an active-site residue. 266–267 (KH) lines the substrate pocket. H267 serves as a coordination point for Ca(2+). Catalysis depends on E291, which acts as the Proton donor. Substrate-binding residues include H361, D405, and R409. Residues 441 to 528 (GSTQQRWINN…ATAVWQYTAA (88 aa)) are c. Positions 529 to 614 (ETTPTIGHVG…SNAYNHFTIL (86 aa)) are d. Residues 532 to 612 (PTIGHVGPVM…VNSNAYNHFT (81 aa)) enclose the IPT/TIG domain. The CBM20 domain occupies 613–718 (ILTGDQVTVR…GTATVTVNWQ (106 aa)). Residues 615–718 (TGDQVTVRFV…GTATVTVNWQ (104 aa)) are e.

This sequence belongs to the glycosyl hydrolase 13 family. As to quaternary structure, monomer. The cofactor is Ca(2+).

The protein resides in the secreted. The enzyme catalyses Cyclizes part of a (1-&gt;4)-alpha-D-glucan chain by formation of a (1-&gt;4)-alpha-D-glucosidic bond.. This Bacillus sp. (strain 6.6.3) protein is Cyclomaltodextrin glucanotransferase (cgt).